Consider the following 435-residue polypeptide: Acetylcholine receptor-like protein cup-4 (435 aa).

The signal sequence occupies residues 1-24 (MRLLLIFTVIFVFYLAILKRDVNA). N41, N68, N237, and N249 each carry an N-linked (GlcNAc...) asparagine glycan. 2 helical membrane-spanning segments follow: residues 298–318 (VSFF…AIYL) and 341–361 (ITLF…HGVL). N403 carries an N-linked (GlcNAc...) asparagine glycan. Residues 413 to 433 (PLAGLAMFVYFVIMFILYLVV) traverse the membrane as a helical segment.

This sequence belongs to the ligand-gated ion channel (TC 1.A.9) family. Acetylcholine receptor (TC 1.A.9.1) subfamily.

The protein resides in the cytoplasmic vesicle membrane. Functionally, thought to regulate endocytosis in coelomocytes through modulation of phospholipase C activity. Possible acetylcholine receptor. This Caenorhabditis briggsae protein is Acetylcholine receptor-like protein cup-4.